A 26-amino-acid polypeptide reads, in one-letter code: Oxyopinin-3b (26 aa).

As to expression, expressed by the venom gland.

The protein resides in the secreted. Functionally, may have cytolytic and antimicrobial activity. This chain is Oxyopinin-3b, found in Oxyopes takobius (Lynx spider).